The chain runs to 351 residues: Phospho-N-acetylmuramoyl-pentapeptide-transferase (351 aa).

Helical transmembrane passes span 17 to 37 (TAYA…FIIS), 61 to 83 (MGIP…FFWI), 88 to 105 (IYFL…CLGF), 130 to 150 (ILFS…HVSI), 158 to 178 (SLKL…LISA), 190 to 210 (GLAI…AYLT), 230 to 250 (LVIF…FNAY), 254 to 274 (IMMG…VALI), 279 to 299 (ILFA…IIQV), and 328 to 348 (QVVI…LSTI).

It belongs to the glycosyltransferase 4 family. MraY subfamily. Requires Mg(2+) as cofactor.

The protein resides in the cell inner membrane. The enzyme catalyses UDP-N-acetyl-alpha-D-muramoyl-L-alanyl-gamma-D-glutamyl-meso-2,6-diaminopimeloyl-D-alanyl-D-alanine + di-trans,octa-cis-undecaprenyl phosphate = di-trans,octa-cis-undecaprenyl diphospho-N-acetyl-alpha-D-muramoyl-L-alanyl-D-glutamyl-meso-2,6-diaminopimeloyl-D-alanyl-D-alanine + UMP. It functions in the pathway cell wall biogenesis; peptidoglycan biosynthesis. In terms of biological role, catalyzes the initial step of the lipid cycle reactions in the biosynthesis of the cell wall peptidoglycan: transfers peptidoglycan precursor phospho-MurNAc-pentapeptide from UDP-MurNAc-pentapeptide onto the lipid carrier undecaprenyl phosphate, yielding undecaprenyl-pyrophosphoryl-MurNAc-pentapeptide, known as lipid I. This Borrelia recurrentis (strain A1) protein is Phospho-N-acetylmuramoyl-pentapeptide-transferase.